Here is a 91-residue protein sequence, read N- to C-terminus: Non-specific lipid-transfer protein 1 (91 aa).

4 cysteine pairs are disulfide-bonded: Cys4–Cys51, Cys14–Cys28, Cys29–Cys74, and Cys49–Cys88.

In terms of tissue distribution, expressed in seeds (at protein level).

Functionally, plant non-specific lipid-transfer proteins transfer phospholipids as well as galactolipids across membranes. May play a role in wax or cutin deposition in the cell walls of expanding epidermal cells and certain secretory tissues. Binds to both saturated and unsaturated lipids, with the highest binding efficiency for linoleic acid, followed by linolenic acid. In Foeniculum vulgare (Fennel), this protein is Non-specific lipid-transfer protein 1.